Consider the following 583-residue polypeptide: PTS system lactose-specific EIICB component (583 aa).

A PTS EIIC type-3 domain is found at 8-409; sequence IEKGKPFFEK…VVDVMIYYPF (402 aa). Transmembrane regions (helical) follow at residues 30–50, 64–84, 103–123, 137–157, 176–196, 222–242, 283–303, 339–359, and 381–401; these read GFIA…ITYV, GILM…VAGT, INFI…AADP, KGLL…NFFI, VFKD…LDLL, GWIG…VGIH, FVAT…FMWL, VFFI…KFFV, and IVMG…LIVV. Residues 453–462 are compositionally biased toward low complexity; sequence ANETTTTESA. Positions 453–475 are disordered; sequence ANETTTTESAPSDEEVSAKNSSN. A PTS EIIB type-3 domain is found at 480–583; it reads QTNVLVLCAG…LDFVQQQFEK (104 aa). The Phosphocysteine intermediate; for EIIB activity role is filled by Cys-487. Residue Cys-487 is modified to Phosphocysteine; by EIIA.

Its subcellular location is the cell membrane. The catalysed reaction is lactose(out) + N(pros)-phospho-L-histidyl-[protein] = lactose 6-phosphate(in) + L-histidyl-[protein]. The phosphoenolpyruvate-dependent sugar phosphotransferase system (sugar PTS), a major carbohydrate active transport system, catalyzes the phosphorylation of incoming sugar substrates concomitantly with their translocation across the cell membrane. The enzyme II LacEF PTS system is involved in lactose transport. The sequence is that of PTS system lactose-specific EIICB component from Staphylococcus haemolyticus (strain JCSC1435).